We begin with the raw amino-acid sequence, 384 residues long: 4-hydroxy-3-methylbut-2-en-1-yl diphosphate synthase (flavodoxin) (384 aa).

[4Fe-4S] cluster contacts are provided by cysteine 280, cysteine 283, cysteine 315, and glutamate 322.

This sequence belongs to the IspG family. [4Fe-4S] cluster serves as cofactor.

The enzyme catalyses (2E)-4-hydroxy-3-methylbut-2-enyl diphosphate + oxidized [flavodoxin] + H2O + 2 H(+) = 2-C-methyl-D-erythritol 2,4-cyclic diphosphate + reduced [flavodoxin]. The protein operates within isoprenoid biosynthesis; isopentenyl diphosphate biosynthesis via DXP pathway; isopentenyl diphosphate from 1-deoxy-D-xylulose 5-phosphate: step 5/6. In terms of biological role, converts 2C-methyl-D-erythritol 2,4-cyclodiphosphate (ME-2,4cPP) into 1-hydroxy-2-methyl-2-(E)-butenyl 4-diphosphate. In Frankia casuarinae (strain DSM 45818 / CECT 9043 / HFP020203 / CcI3), this protein is 4-hydroxy-3-methylbut-2-en-1-yl diphosphate synthase (flavodoxin).